The following is a 552-amino-acid chain: Urocanate hydratase (552 aa).

NAD(+) is bound by residues 49-50, Gln127, 173-175, Glu193, Arg198, 239-240, 260-264, 270-271, and Tyr319; these read GG, GMG, NA, QTSAH, and YV. Residue Cys407 is part of the active site. Gly489 is a binding site for NAD(+).

Belongs to the urocanase family. As to quaternary structure, composed of at least two subunits. The cofactor is NAD(+).

The protein resides in the cytoplasm. The enzyme catalyses 4-imidazolone-5-propanoate = trans-urocanate + H2O. The protein operates within amino-acid degradation; L-histidine degradation into L-glutamate; N-formimidoyl-L-glutamate from L-histidine: step 2/3. Catalyzes the conversion of urocanate to 4-imidazolone-5-propionate. The chain is Urocanate hydratase from Bacillus subtilis (strain 168).